The primary structure comprises 201 residues: uncharacterized protein (201 aa).

Positions 1 to 28 (MMTFKNLRYGLSSSVVLAASLFSVLSYA) are cleaved as a signal peptide.

This sequence belongs to the fimbrial protein family.

It localises to the fimbrium. Part of the yadCKLM-htrE-yadVN fimbrial operon. Could contribute to adhesion to various surfaces in specific environmental niches. This is an uncharacterized protein from Escherichia coli (strain K12).